A 95-amino-acid chain; its full sequence is DNA-directed RNA polymerase subunit Rpo6 (95 aa).

Belongs to the archaeal Rpo6/eukaryotic RPB6 RNA polymerase subunit family. Part of the RNA polymerase complex.

It localises to the cytoplasm. The catalysed reaction is RNA(n) + a ribonucleoside 5'-triphosphate = RNA(n+1) + diphosphate. Its function is as follows. DNA-dependent RNA polymerase (RNAP) catalyzes the transcription of DNA into RNA using the four ribonucleoside triphosphates as substrates. In Saccharolobus islandicus (strain M.16.27) (Sulfolobus islandicus), this protein is DNA-directed RNA polymerase subunit Rpo6.